Here is a 600-residue protein sequence, read N- to C-terminus: MEKLSALQEQKGELRKRLSYTTHKLEKLETEFDSTRHYLEIELRRAQEELDKVTEKLRRIQSNYMALQRINQELEDKLYRMGQHYEEEKRAMSHEIVALNSHLLEAKVTIDKLSEDNELYRKDCNLAAQLLQCSQTYGRVHKVSELPSDFQQRVSLHMEKHGCSLPSALCHPAYADSVPTCVIAKVLEKPDPGSLSSRMSDASARDLGYRDGVEKSGPRPPYKGDIYCSDPALYCPDEREHARRPSVDTPVTDVGFLRAQNSTDSAAEEEEEAEAAAFPEAYRREAYQGYAASLPTSSSYSSFSATSEEKEHAQAGTLTASQQAIYLSSRDEFFNRKPSATYGSGPRFAKAASTLGSPLEAQVAPGFARTVSPYPAEPYRYPASPGPQQALMPPNLWSLRAKPSGNRLAGEDIRGQWRPVSVEDVGAYSYQAGAAAGRAASPCNYSERYYGGGGGGGAAGGGSPGDKAEGRASPLYATYKADSFSEGDDLSQGHLAEPCFLRAGGDLSLSPSRSADALAGYAASDGDGDRLRVQLCGAGSSPEPEHGSRESLEPSSMEASPEMHPPTRLSPQQAFPRTGGSGLSRKDSLTKAQLYGTLLN.

The residue at position 1 (Met1) is an N-acetylmethionine. Phosphotyrosine is present on Tyr137. Residues 192-222 (PGSLSSRMSDASARDLGYRDGVEKSGPRPPY) are disordered. Residue Ser200 is modified to Phosphoserine. The segment covering 203–217 (SARDLGYRDGVEKSG) has biased composition (basic and acidic residues). Ser229 and Ser246 each carry phosphoserine. Thr249 bears the Phosphothreonine mark. Ser265 carries the phosphoserine modification. The segment at 298 to 317 (SSYSSFSATSEEKEHAQAGT) is disordered. A Phosphoserine modification is found at Ser372. Position 380 is an asymmetric dimethylarginine (Arg380). A phosphoserine mark is found at Ser463, Ser473, Ser483, Ser485, Ser508, Ser510, and Ser514. A disordered region spans residues 537–590 (GAGSSPEPEHGSRESLEPSSMEASPEMHPPTRLSPQQAFPRTGGSGLSRKDSLT). Basic and acidic residues predominate over residues 543–552 (EPEHGSRESL). Phosphoserine occurs at positions 560 and 570.

As to quaternary structure, interacts with DLG4 and DLGAP1 and forms a ternary complex.

Its subcellular location is the cytoplasm. The protein localises to the membrane. In terms of biological role, may sustain the structure of the postsynaptic density (PSD). The polypeptide is Brain-enriched guanylate kinase-associated protein (Begain) (Mus musculus (Mouse)).